A 1157-amino-acid chain; its full sequence is DNA-directed RNA polymerase subunit beta (1157 aa).

It belongs to the RNA polymerase beta chain family. As to quaternary structure, the RNAP catalytic core consists of 2 alpha, 1 beta, 1 beta' and 1 omega subunit. When a sigma factor is associated with the core the holoenzyme is formed, which can initiate transcription.

The catalysed reaction is RNA(n) + a ribonucleoside 5'-triphosphate = RNA(n+1) + diphosphate. DNA-dependent RNA polymerase catalyzes the transcription of DNA into RNA using the four ribonucleoside triphosphates as substrates. The polypeptide is DNA-directed RNA polymerase subunit beta (Tropheryma whipplei (strain Twist) (Whipple's bacillus)).